Reading from the N-terminus, the 250-residue chain is Protein lin-28 homolog B (250 aa).

Disordered regions lie at residues Met1–Leu27 and Arg98–Gly126. A compositionally biased stretch (basic and acidic residues) spans Gly9–Glu18. Residues His29–Pro102 enclose the CSD domain. Positions Pro114–Lys125 are enriched in basic residues. 2 consecutive CCHC-type zinc fingers follow at residues Asp127–Leu144 and Lys149–His166. Zn(2+)-binding residues include Cys129, Cys132, His137, Cys142, Cys151, Cys154, His159, and Cys164. Residues Pro165–Thr250 form a disordered region. The span at Thr168–Gln177 shows a compositional bias: polar residues. Positions Gly200–Glu209 are enriched in low complexity. Residues Gly210–Gly219 show a composition bias toward basic and acidic residues.

Belongs to the lin-28 family.

The protein localises to the nucleus. Its subcellular location is the nucleolus. In terms of biological role, suppressor of specific microRNA (miRNA) biogenesis. Binds target primary miRNA transcripts and sequester them in the nucleolus, away from the microprocessor complex, hence preventing their processing into mature miRNA. The specific interaction with target pri-miRNAs occurs via an 5'-GGAG-3' motif in the pre-miRNA terminal loop. The sequence is that of Protein lin-28 homolog B (LIN28B) from Gallus gallus (Chicken).